Consider the following 428-residue polypeptide: Growth/differentiation factor 2 (428 aa).

The first 22 residues, 1 to 22 (MSPGAFRVALLPLFLLVCVTQQ), serve as a signal peptide directing secretion. The propeptide occupies 23-318 (KPLQNWEQAS…VGPLLARRKR (296 aa)). Residues Asn70 and Asn135 are each glycosylated (N-linked (GlcNAc...) asparagine). An intrachain disulfide couples Cys155 to Cys236. Asn262 carries N-linked (GlcNAc...) asparagine glycosylation. Cystine bridges form between Cys326-Cys392, Cys355-Cys425, and Cys359-Cys427. Residues 401–415 (SILYKDDMGVPTLKY) form an interaction with ENG region.

Belongs to the TGF-beta family. Homodimer; disulfide-linked. Detected in extracellular fluid as mature homodimer, and in complex with its propeptide. Interacts with ACVRL1, BMPR2 and ACVR2B with high affinity (in vitro). Identified in a complex with ACVRL1 and ACVR2B. Has ten times lower affinity for ACVR2A (in vitro). Interacts with ENG, forming a heterotetramer with a 2:2 stoichiometry. Can form a heteromeric complex with ENG and ACVRL1. Interacts with type I receptor ACVR1. Post-translationally, a reversible disulfide bond can be formed between the two subunits in the homodimer; this has no effect on GDF2 activity.

It localises to the secreted. Potent circulating inhibitor of angiogenesis. Signals through the type I activin receptor ACVRL1 but not other Alks. Signaling through SMAD1 in endothelial cells requires TGF-beta coreceptor endoglin/ENG. This chain is Growth/differentiation factor 2 (Gdf2), found in Mus musculus (Mouse).